Here is a 443-residue protein sequence, read N- to C-terminus: ATP-dependent protease ATPase subunit HslU (443 aa).

Residues Ile-19, 61–66, Asp-256, Glu-321, and Arg-393 contribute to the ATP site; that span reads GVGKTE.

This sequence belongs to the ClpX chaperone family. HslU subfamily. In terms of assembly, a double ring-shaped homohexamer of HslV is capped on each side by a ring-shaped HslU homohexamer. The assembly of the HslU/HslV complex is dependent on binding of ATP.

The protein localises to the cytoplasm. In terms of biological role, ATPase subunit of a proteasome-like degradation complex; this subunit has chaperone activity. The binding of ATP and its subsequent hydrolysis by HslU are essential for unfolding of protein substrates subsequently hydrolyzed by HslV. HslU recognizes the N-terminal part of its protein substrates and unfolds these before they are guided to HslV for hydrolysis. In Ralstonia nicotianae (strain ATCC BAA-1114 / GMI1000) (Ralstonia solanacearum), this protein is ATP-dependent protease ATPase subunit HslU.